Reading from the N-terminus, the 372-residue chain is Molybdopterin synthase catalytic subunit (372 aa).

Substrate is bound by residues 101-102, K117, and 124-126; these read HR and KKE.

This sequence belongs to the MoaE family. MOCS2B subfamily. In terms of assembly, heterotetramer; composed of 2 small (Mocs2A) and 2 large (Mocs2B) subunits.

The protein localises to the cytoplasm. The enzyme catalyses 2 [molybdopterin-synthase sulfur-carrier protein]-C-terminal-Gly-aminoethanethioate + cyclic pyranopterin phosphate + H2O = molybdopterin + 2 [molybdopterin-synthase sulfur-carrier protein]-C-terminal Gly-Gly + 2 H(+). It participates in cofactor biosynthesis; molybdopterin biosynthesis. Catalytic subunit of the molybdopterin synthase complex, a complex that catalyzes the conversion of precursor Z into molybdopterin. Acts by mediating the incorporation of 2 sulfur atoms from thiocarboxylated Mocs2A into precursor Z to generate a dithiolene group. This Drosophila willistoni (Fruit fly) protein is Molybdopterin synthase catalytic subunit.